Reading from the N-terminus, the 659-residue chain is UDP-glucuronate:xylan alpha-glucuronosyltransferase 1 (659 aa).

The segment covering 1 to 14 (MANSPAAPAPTTTT) has biased composition (low complexity). The tract at residues 1-20 (MANSPAAPAPTTTTGGDSRR) is disordered. Residues 70–90 (FQIVKLLLFILLSATLFTIIY) traverse the membrane as a helical; Signal-anchor for type II membrane protein segment. D416 and D418 together coordinate Mn(2+). Residues 416-418 (DAD), 445-447 (NSG), 472-476 (NGGDQ), and 526-531 (HYLGMK) contribute to the substrate site. H526 is a Mn(2+) binding site.

This sequence belongs to the glycosyltransferase 8 family. Glycogenin subfamily. Requires Mn(2+) as cofactor.

The protein localises to the golgi apparatus membrane. Its function is as follows. Glycosyltransferase required for the addition of both glucuronic acid and 4-O-methylglucuronic acid branches to xylan in stem cell walls. In association with GUX2, is responsible for almost all of the substitutions of the xylan backbone in stem glucuronoxylan. The protein is UDP-glucuronate:xylan alpha-glucuronosyltransferase 1 (GUX1) of Arabidopsis thaliana (Mouse-ear cress).